The primary structure comprises 502 residues: Lysine--tRNA ligase (502 aa).

Mg(2+) contacts are provided by glutamate 413 and glutamate 420.

Belongs to the class-II aminoacyl-tRNA synthetase family. Homodimer. It depends on Mg(2+) as a cofactor.

It localises to the cytoplasm. It carries out the reaction tRNA(Lys) + L-lysine + ATP = L-lysyl-tRNA(Lys) + AMP + diphosphate. The protein is Lysine--tRNA ligase of Aromatoleum aromaticum (strain DSM 19018 / LMG 30748 / EbN1) (Azoarcus sp. (strain EbN1)).